Consider the following 423-residue polypeptide: UPF0229 protein VV1_2091 (423 aa).

The segment at 81-111 is disordered; it reads QFITGDKIERPKGGQGGGGAGDGDASADGEG. A compositionally biased stretch (gly residues) spans 93–102; it reads GGQGGGGAGD.

It belongs to the UPF0229 family.

The polypeptide is UPF0229 protein VV1_2091 (Vibrio vulnificus (strain CMCP6)).